A 77-amino-acid polypeptide reads, in one-letter code: Acyl carrier protein (77 aa).

The Carrier domain maps to 2 to 77 (ADVLERVTKI…DAVTYIESHL (76 aa)). Serine 37 bears the O-(pantetheine 4'-phosphoryl)serine mark.

It belongs to the acyl carrier protein (ACP) family. Post-translationally, 4'-phosphopantetheine is transferred from CoA to a specific serine of apo-ACP by AcpS. This modification is essential for activity because fatty acids are bound in thioester linkage to the sulfhydryl of the prosthetic group.

It is found in the cytoplasm. It participates in lipid metabolism; fatty acid biosynthesis. In terms of biological role, carrier of the growing fatty acid chain in fatty acid biosynthesis. The chain is Acyl carrier protein from Bacillus mycoides (strain KBAB4) (Bacillus weihenstephanensis).